We begin with the raw amino-acid sequence, 130 residues long: MSMQDPIADMLTRIRNGQAANHVSVKMPSAKLKVAIAKLLKDEGFITEYAVADEAKPELEITLKYFQGKPVVETIQRVSRPGLRIYKGKDELPKVMGGLGIAIVSTSQGLMTDRAARQNGTGGEVICYVA.

This sequence belongs to the universal ribosomal protein uS8 family. Part of the 30S ribosomal subunit. Contacts proteins S5 and S12.

Functionally, one of the primary rRNA binding proteins, it binds directly to 16S rRNA central domain where it helps coordinate assembly of the platform of the 30S subunit. In Shewanella frigidimarina (strain NCIMB 400), this protein is Small ribosomal subunit protein uS8.